The chain runs to 512 residues: ETS translocation variant 3 (512 aa).

The ETS DNA-binding region spans 35 to 116 (IQLWHFILEL…KGKRFTYKFN (82 aa)). Residues 138-196 (QSAPPVPTASSRFHFPPLDTHSPTSDVQPGRFSASSLTASGQESSNGTDRKAELSXLED) form a disordered region. A phosphoserine mark is found at Ser139, Ser159, and Ser315. Over residues 158–184 (HSPTSDVQPGRFSASSLTASGQESSNG) the composition is skewed to polar residues. A disordered region spans residues 341 to 512 (QFSIKLQPPP…QGLATAAADA (172 aa)). Over residues 380–406 (IKVEPASEKDAESLRQSAREKEEHTXE) the composition is skewed to basic and acidic residues. A Glycyl lysine isopeptide (Lys-Gly) (interchain with G-Cter in SUMO2) cross-link involves residue Lys381. Lys388 carries the post-translational modification N6-acetyllysine; alternate. Lys388 participates in a covalent cross-link: Glycyl lysine isopeptide (Lys-Gly) (interchain with G-Cter in SUMO2); alternate. The span at 443-452 (EPLEVTEDIE) shows a compositional bias: acidic residues. Composition is skewed to basic and acidic residues over residues 453-468 (DRPGKEPSAPEKKEDA) and 479-491 (RWNDDPEARELSK).

This sequence belongs to the ETS family.

It is found in the nucleus. Transcriptional repressor that contribute to growth arrest during terminal macrophage differentiation by repressing target genes involved in Ras-dependent proliferation. Represses MMP1 promoter activity. The polypeptide is ETS translocation variant 3 (ETV3) (Ateles geoffroyi (Black-handed spider monkey)).